The following is a 75-amino-acid chain: Large ribosomal subunit protein uL29 (75 aa).

Belongs to the universal ribosomal protein uL29 family.

In Nostoc punctiforme (strain ATCC 29133 / PCC 73102), this protein is Large ribosomal subunit protein uL29.